Here is a 264-residue protein sequence, read N- to C-terminus: tRNA (guanine-N(1)-)-methyltransferase (264 aa).

S-adenosyl-L-methionine-binding positions include Gly-125 and 145-150 (LGDFVL).

Belongs to the RNA methyltransferase TrmD family. In terms of assembly, homodimer.

Its subcellular location is the cytoplasm. The enzyme catalyses guanosine(37) in tRNA + S-adenosyl-L-methionine = N(1)-methylguanosine(37) in tRNA + S-adenosyl-L-homocysteine + H(+). Specifically methylates guanosine-37 in various tRNAs. The sequence is that of tRNA (guanine-N(1)-)-methyltransferase from Burkholderia cenocepacia (strain ATCC BAA-245 / DSM 16553 / LMG 16656 / NCTC 13227 / J2315 / CF5610) (Burkholderia cepacia (strain J2315)).